The primary structure comprises 605 residues: Anaerobic ribonucleoside-triphosphate reductase (605 aa).

DCTP-binding residues include H64 and H66. DGTP-binding residues include H64, H66, D67, E100, and K103. DCTP contacts are provided by residues E100, K103, Q114, K146, and 445–448 (AENL). E100, K103, Q114, and K146 together coordinate dATP. Position 100 (E100) interacts with dTTP. Residues Q114 and K146 each coordinate dTTP. The dGTP site is built by K146, N447, and L448. A Glycine radical domain is found at 482-605 (ENITPFEKIS…KEIMHRVKHQ (124 aa)). Residues C543, C546, C561, and C564 each contribute to the Zn(2+) site. Residue G580 is modified to Glycine radical.

This sequence belongs to the anaerobic ribonucleoside-triphosphate reductase family. As to quaternary structure, homodimer. Forms a tetramer composed of two NrdD and two NrdG subunits.

The enzyme catalyses a ribonucleoside 5'-triphosphate + formate + H(+) = a 2'-deoxyribonucleoside 5'-triphosphate + CO2 + H2O. With respect to regulation, activated under anaerobic conditions by NrdG, a tightly associated activase. Activation involves the formation of a glycyl radical at Gly-580. In terms of biological role, catalyzes the conversion of ribonucleotides into deoxyribonucleotides, which are required for DNA synthesis and repair. The protein is Anaerobic ribonucleoside-triphosphate reductase of Enterobacteria phage T4 (Bacteriophage T4).